A 380-amino-acid polypeptide reads, in one-letter code: Tubby-like F-box protein 9 (380 aa).

In terms of domain architecture, F-box spans 30 to 76; that stretch reads PFSWSELPEELLREILIRVETVDGGDWPSRRNVVACAGVCRSWRILT. The disordered stretch occupies residues 258-283; the sequence is SSRSSPVFRSHSKPLRSNSASCSDSG. A compositionally biased stretch (polar residues) spans 272–283; that stretch reads LRSNSASCSDSG.

This sequence belongs to the TUB family. As to quaternary structure, part of a SCF (SKP1-cullin-F-box) protein ligase complex. Interacts with SKP1A/ASK1 and XERICO. As to expression, ubiquitous.

It participates in protein modification; protein ubiquitination. Component of SCF(ASK-cullin-F-box) E3 ubiquitin ligase complexes, which may mediate the ubiquitination and subsequent proteasomal degradation of target proteins. Confers sensitivity to ABA during seed germination and early seedling development. This Arabidopsis thaliana (Mouse-ear cress) protein is Tubby-like F-box protein 9.